The following is a 103-amino-acid chain: c-Myc-binding protein (103 aa).

It belongs to the AMY1 family. Binds via its C-terminal region to the N-terminal region of MYC. Associates with AKAP1/S-AKAP84. Interacts with MYCBPAP. Interacts with CFAP91.

It is found in the cytoplasm. Its subcellular location is the nucleus. Its function is as follows. May control the transcriptional activity of MYC. Stimulates the activation of E box-dependent transcription by MYC. The chain is c-Myc-binding protein (MYCBP) from Pongo abelii (Sumatran orangutan).